The primary structure comprises 250 residues: 3-deoxy-manno-octulosonate cytidylyltransferase (250 aa).

This sequence belongs to the KdsB family.

The protein localises to the cytoplasm. It carries out the reaction 3-deoxy-alpha-D-manno-oct-2-ulosonate + CTP = CMP-3-deoxy-beta-D-manno-octulosonate + diphosphate. The protein operates within nucleotide-sugar biosynthesis; CMP-3-deoxy-D-manno-octulosonate biosynthesis; CMP-3-deoxy-D-manno-octulosonate from 3-deoxy-D-manno-octulosonate and CTP: step 1/1. Its pathway is bacterial outer membrane biogenesis; lipopolysaccharide biosynthesis. Functionally, activates KDO (a required 8-carbon sugar) for incorporation into bacterial lipopolysaccharide in Gram-negative bacteria. This Francisella tularensis subsp. novicida (strain U112) protein is 3-deoxy-manno-octulosonate cytidylyltransferase.